The chain runs to 78 residues: Probable [Fe-S]-dependent transcriptional repressor (78 aa).

Iron-sulfur cluster is bound by residues C56, C61, C64, and C70.

This sequence belongs to the FeoC family.

In terms of biological role, may function as a transcriptional regulator that controls feoABC expression. In Escherichia fergusonii (strain ATCC 35469 / DSM 13698 / CCUG 18766 / IAM 14443 / JCM 21226 / LMG 7866 / NBRC 102419 / NCTC 12128 / CDC 0568-73), this protein is Probable [Fe-S]-dependent transcriptional repressor.